A 150-amino-acid chain; its full sequence is FAD synthase (150 aa).

ATP contacts are provided by residues 11-12 (TF), 16-19 (HPGH), Asp96, and Tyr124.

Belongs to the archaeal FAD synthase family. Homodimer. A divalent metal cation is required as a cofactor.

The catalysed reaction is FMN + ATP + H(+) = FAD + diphosphate. The protein operates within cofactor biosynthesis; FAD biosynthesis; FAD from FMN: step 1/1. Its function is as follows. Catalyzes the transfer of the AMP portion of ATP to flavin mononucleotide (FMN) to produce flavin adenine dinucleotide (FAD) coenzyme. This Methanococcus maripaludis (strain C7 / ATCC BAA-1331) protein is FAD synthase.